The chain runs to 622 residues: Leucine-rich repeat and immunoglobulin-like domain-containing nogo receptor-interacting protein 1-B (622 aa).

The first 43 residues, 1–43, serve as a signal peptide directing secretion; the sequence is MTFLQVTIKMVAREASGHSYLVACWQPILILMLGTVLSGSATG. 2 disulfide bridges follow: Cys44–Cys50 and Cys48–Cys59. An LRRNT domain is found at 44 to 73; that stretch reads CPSRCECSAQERSVVCHRRKLITLPEGIPI. At 44–563 the chain is on the extracellular side; the sequence is CPSRCECSAQ…FDMKTLIIAT (520 aa). LRR repeat units lie at residues 74-95, 98-119, 122-143, 146-167, 170-191, 194-215, 218-239, 266-287, 290-311, 314-335, and 338-359; these read DTRL…EFLN, QLED…AFSN, GLRT…VFTG, NLTR…MFQE, NLKE…AFHG, SLEQ…AFSH, NLLT…SFRR, NITT…AIQH, YLRF…KMHN, RLQA…SFKG, and YLRV…AFHS. Asn146 carries an N-linked (GlcNAc...) asparagine glycan. Asn204 is a glycosylation site (N-linked (GlcNAc...) asparagine). N-linked (GlcNAc...) asparagine glycans are attached at residues Asn266, Asn276, and Asn295. N-linked (GlcNAc...) asparagine glycosylation is present at Asn343. The 55-residue stretch at 371–425 folds into the LRRCT domain; the sequence is NPLACDCRLLWVFRRRWRLNFNRQQPSCETPEFLQGKEFKDFPDVLPPNYFTCQK. 3 disulfides stabilise this stretch: Cys375–Cys398, Cys377–Cys423, and Cys448–Cys499. Residues 413–515 form the Ig-like C2-type domain; it reads PDVLPPNYFT…GNDTRLAHLH (103 aa). N-linked (GlcNAc...) asparagine glycosylation is found at Asn494, Asn507, Asn528, and Asn544. Residues 564–584 traverse the membrane as a helical segment; the sequence is TMGFISFLGVVLFCLVLLFLW. At 585–622 the chain is on the cytoplasmic side; it reads SRGKGNAKPNIEIEYVPRKVDGENSPNEGSHKISMKMI.

Its subcellular location is the cell membrane. Its function is as follows. May play a role in regulating axonal regeneration and plasticity in the adult central nervous system. This is Leucine-rich repeat and immunoglobulin-like domain-containing nogo receptor-interacting protein 1-B (lingo1b) from Danio rerio (Zebrafish).